Consider the following 114-residue polypeptide: Small ribosomal subunit protein eS25 (114 aa).

The disordered stretch occupies residues 1-33 (MAPKKDKAPPPSSKPAKSGGKQKKKKWSKGKQK). Over residues 20-30 (GKQKKKKWSKG) the composition is skewed to basic residues.

This sequence belongs to the eukaryotic ribosomal protein eS25 family.

This chain is Small ribosomal subunit protein eS25 (RPS25), found in Amaranthus cruentus (Purple amaranth).